The following is a 304-amino-acid chain: Glutaminase (304 aa).

Positions 63, 114, 158, 165, 189, 240, and 258 each coordinate substrate.

It belongs to the glutaminase family. As to quaternary structure, homotetramer.

The catalysed reaction is L-glutamine + H2O = L-glutamate + NH4(+). The sequence is that of Glutaminase from Shewanella putrefaciens (strain CN-32 / ATCC BAA-453).